We begin with the raw amino-acid sequence, 43 residues long: Lanthionine-containing peptide SapB (43 aa).

Residues 1–21 form the signal peptide; sequence MALLDLQAMDTPAEDSFGELR. 2 consecutive cross-links (lanthionine (Ser-Cys)) follow at residues 24-31 and 34-41; these read SQVSLLVC and SSLSVVLC. Ser-27 and Ser-37 each carry 2,3-didehydroalanine (Ser).

Belongs to the lanthionine-containing morphogen protein family. Post-translationally, maturation involves the enzymatic conversion of Ser into dehydrated AA and the formation of thioether bonds with cysteine. This is followed by membrane translocation and cleavage of the modified precursor.

In terms of biological role, lanthionine-containing peptide devoid of antibiotic properties, involved in the formation of aerial mycelium. Suggested to self-assemble at air-water interfaces, thus providing a film of surfactant through which nascent aerial hyphae can emerge. The aerial hyphae differentiate further into spores. The sequence is that of Lanthionine-containing peptide SapB (ramS) from Streptomyces griseus.